Consider the following 328-residue polypeptide: GMP reductase (328 aa).

The active-site Thioimidate intermediate is the Cys-176. 205 to 228 lines the NADP(+) pocket; that stretch reads IIADGGIRTHGDIAKSIRFGASMI.

It belongs to the IMPDH/GMPR family. GuaC type 2 subfamily.

The enzyme catalyses IMP + NH4(+) + NADP(+) = GMP + NADPH + 2 H(+). Catalyzes the irreversible NADPH-dependent deamination of GMP to IMP. It functions in the conversion of nucleobase, nucleoside and nucleotide derivatives of G to A nucleotides, and in maintaining the intracellular balance of A and G nucleotides. The protein is GMP reductase of Streptococcus pneumoniae (strain CGSP14).